Reading from the N-terminus, the 379-residue chain is Cobalt-precorrin-5B C(1)-methyltransferase (379 aa).

This sequence belongs to the CbiD family.

It catalyses the reaction Co-precorrin-5B + S-adenosyl-L-methionine = Co-precorrin-6A + S-adenosyl-L-homocysteine. It functions in the pathway cofactor biosynthesis; adenosylcobalamin biosynthesis; cob(II)yrinate a,c-diamide from sirohydrochlorin (anaerobic route): step 6/10. In terms of biological role, catalyzes the methylation of C-1 in cobalt-precorrin-5B to form cobalt-precorrin-6A. The chain is Cobalt-precorrin-5B C(1)-methyltransferase from Salmonella paratyphi B (strain ATCC BAA-1250 / SPB7).